Here is a 260-residue protein sequence, read N- to C-terminus: MKDILSEIIANKRFEVDLQKQAISIEQLQEGINEVPASRSMKRALASSDSGIIAEFKRRSPSKGWIKQEARPEEIVPSYLAAGASALSILTDEKFFGGSLKDIRTARPLVDVPIIRKDFIIDEYQLYQAKIVGADAVLLIAAALKQEKCQELAEQAHELGLEVLLEIHSAEELPYINSKIDMIGINNRNLGTFFTDVENSFRLAGQLPQDAVLVSESGISDPEVVKRLRTAGFRGFLIGETFMKTPQPGETLQNFLKAIQ.

The protein belongs to the TrpC family.

It carries out the reaction 1-(2-carboxyphenylamino)-1-deoxy-D-ribulose 5-phosphate + H(+) = (1S,2R)-1-C-(indol-3-yl)glycerol 3-phosphate + CO2 + H2O. It functions in the pathway amino-acid biosynthesis; L-tryptophan biosynthesis; L-tryptophan from chorismate: step 4/5. The chain is Indole-3-glycerol phosphate synthase from Bacteroides thetaiotaomicron (strain ATCC 29148 / DSM 2079 / JCM 5827 / CCUG 10774 / NCTC 10582 / VPI-5482 / E50).